We begin with the raw amino-acid sequence, 114 residues long: MSDDVALPLEFTDAAANKVKSLIADEDNPNLKLRVYITGGGCSGFQYGFTFDDQVNEGDMTIEKQGVGLVVDPMSLQYLVGGSVDYTEGLEGSRFIVTNPNAKSTCGCGSSFSI.

Residues Cys-42, Cys-106, and Cys-108 each coordinate iron-sulfur cluster.

The protein belongs to the HesB/IscA family. Homodimer. The cofactor is iron-sulfur cluster.

Required for insertion of 4Fe-4S clusters for at least IspG. This Shigella boydii serotype 18 (strain CDC 3083-94 / BS512) protein is Iron-sulfur cluster insertion protein ErpA.